Reading from the N-terminus, the 681-residue chain is Type VI secretion system spike protein VgrG1 (681 aa).

Residues 621–640 form a disordered region; the sequence is NSGGSPSSGSGWGGKSPVDP.

Belongs to the VgrG protein family.

Its subcellular location is the secreted. The enzyme catalyses L-arginyl-[protein] + NAD(+) = N(omega)-(ADP-D-ribosyl)-L-arginyl-[protein] + nicotinamide + H(+). Part of the type VI secretion system specialized secretion system, which delivers several virulence factors in both prokaryotic and eukaryotic cells during infection. Acts directly as an secreted effector with an actin ADP-ribosyltransferase activity that disrupts the host actin cytoskeleton, leading to a decrease in host cell viability and an increase in apoptosis. The chain is Type VI secretion system spike protein VgrG1 (vgrG1) from Aeromonas hydrophila.